Here is a 187-residue protein sequence, read N- to C-terminus: Putative protein 2 (187 aa).

The next 2 membrane-spanning stretches (helical) occupy residues Met10 to Val27 and Val99 to Val121.

The protein belongs to the TMEM9 family.

Its subcellular location is the membrane. The protein is Putative protein 2 of Takifugu rubripes (Japanese pufferfish).